The sequence spans 373 residues: Enoyl-[acyl-carrier-protein] reductase, mitochondrial (373 aa).

Residues 1-53 (MLVSQRVTGARARAPQLAGLLEAWYRHGRTTSSYSALSEPSRVRALVYGNHGD) constitute a mitochondrion transit peptide. Lys61 carries the N6-acetyllysine; alternate modification. Lys61 bears the N6-succinyllysine; alternate mark. Tyr94 functions as the Proton donor in the catalytic mechanism. NADP(+) is bound by residues Asn167, 193-196 (NSGV), and 216-218 (RDR). An N6-acetyllysine; alternate mark is found at Lys252 and Lys267. N6-succinyllysine; alternate is present on residues Lys252 and Lys267. NADP(+)-binding positions include 285–288 (YGGM) and 310–312 (FWL). N6-succinyllysine is present on Lys316. Lys368 provides a ligand contact to NADP(+).

It belongs to the zinc-containing alcohol dehydrogenase family. Quinone oxidoreductase subfamily. Homodimer. Expressed in Purkinje cells (at protein level).

It localises to the mitochondrion. The enzyme catalyses a 2,3-saturated acyl-[ACP] + NADP(+) = a (2E)-enoyl-[ACP] + NADPH + H(+). It carries out the reaction (2E)-butenoyl-[ACP] + NADPH + H(+) = butanoyl-[ACP] + NADP(+). The catalysed reaction is (2E)-hexenoyl-[ACP] + NADPH + H(+) = hexanoyl-[ACP] + NADP(+). It catalyses the reaction (2E)-octenoyl-[ACP] + NADPH + H(+) = octanoyl-[ACP] + NADP(+). The enzyme catalyses (2E)-decenoyl-[ACP] + NADPH + H(+) = decanoyl-[ACP] + NADP(+). It carries out the reaction (2E)-dodecenoyl-[ACP] + NADPH + H(+) = dodecanoyl-[ACP] + NADP(+). The catalysed reaction is (2E)-tetradecenoyl-[ACP] + NADPH + H(+) = tetradecanoyl-[ACP] + NADP(+). It catalyses the reaction (2E)-hexadecenoyl-[ACP] + NADPH + H(+) = hexadecanoyl-[ACP] + NADP(+). Functionally, catalyzes the NADPH-dependent reduction of trans-2-enoyl thioesters in mitochondrial fatty acid synthesis (fatty acid synthesis type II). Fatty acid chain elongation in mitochondria uses acyl carrier protein (ACP) as an acyl group carrier, but the enzyme accepts both ACP and CoA thioesters as substrates in vitro. Displays a preference for medium-chain over short- and long-chain substrates. May provide the octanoyl chain used for lipoic acid biosynthesis, regulating protein lipoylation and mitochondrial respiratory activity particularly in Purkinje cells. Involved in iron homeostasis; affecting Fe-S cluster assembly and ceramide metabolism. Required for proper morphology and bioenergetic functions of mitochondria. Required for maintenance of neurons. This is Enoyl-[acyl-carrier-protein] reductase, mitochondrial (Mecr) from Mus musculus (Mouse).